A 445-amino-acid chain; its full sequence is 2-oxoisovalerate dehydrogenase subunit alpha, mitochondrial (445 aa).

A mitochondrion-targeting transit peptide spans 1-45 (MAVAIAAARVWRLNRGLSQAALLLLRQPGARGLARSHPPRQQQQF). Residues 33 to 52 (LARSHPPRQQQQFSSLDDKP) are disordered. Thiamine diphosphate is bound by residues Tyr158 and Arg159. Ser206 serves as a coordination point for K(+). A thiamine diphosphate-binding site is contributed by Ser207. The K(+) site is built by Pro208, Thr211, and Gln212. Mg(2+) is bound at residue Glu238. Residues Gly239, Ala240, and Arg265 each contribute to the thiamine diphosphate site. Mg(2+) is bound by residues Asn267 and Tyr269. Thiamine diphosphate is bound at residue His336. The residue at position 337 (Ser337) is a Phosphoserine; by BCKDK. The residue at position 338 (Thr338) is a Phosphothreonine. Phosphoserine is present on residues Ser339 and Ser347. Residue Lys356 is modified to N6-acetyllysine; alternate. Lys356 carries the post-translational modification N6-succinyllysine; alternate. Position 380 is an N6-succinyllysine (Lys380).

Belongs to the BCKDHA family. Heterotetramer of 2 alpha/BCKDHA and 2 beta chains/BCKDHB that forms the branched-chain alpha-keto acid decarboxylase (E1) component of the BCKD complex. The branched-chain alpha-ketoacid dehydrogenase is a large complex composed of three major building blocks E1, E2 and E3. It is organized around E2, a 24-meric cubic core composed of DBT, to which are associated 6 to 12 copies of E1, and approximately 6 copies of the dehydrogenase E3, a DLD dimer. Interacts with PPM1K. Requires thiamine diphosphate as cofactor. Mg(2+) serves as cofactor. In terms of processing, phosphorylated at Ser-337 by BCKDK and dephosphorylated by protein phosphatase PPM1K.

It is found in the mitochondrion matrix. It carries out the reaction N(6)-[(R)-lipoyl]-L-lysyl-[protein] + 3-methyl-2-oxobutanoate + H(+) = N(6)-[(R)-S(8)-2-methylpropanoyldihydrolipoyl]-L-lysyl-[protein] + CO2. In terms of biological role, together with BCKDHB forms the heterotetrameric E1 subunit of the mitochondrial branched-chain alpha-ketoacid dehydrogenase (BCKD) complex. The BCKD complex catalyzes the multi-step oxidative decarboxylation of alpha-ketoacids derived from the branched-chain amino-acids valine, leucine and isoleucine producing CO2 and acyl-CoA which is subsequently utilized to produce energy. The E1 subunit catalyzes the first step with the decarboxylation of the alpha-ketoacid forming an enzyme-product intermediate. A reductive acylation mediated by the lipoylamide cofactor of E2 extracts the acyl group from the E1 active site for the next step of the reaction. This chain is 2-oxoisovalerate dehydrogenase subunit alpha, mitochondrial, found in Homo sapiens (Human).